We begin with the raw amino-acid sequence, 478 residues long: Pathogenicity cluster 5 protein d (478 aa).

The N-terminal stretch at 1-19 is a signal peptide; that stretch reads MQIQNLIAALAGMAVVAEA. Disordered stretches follow at residues 35 to 89 and 299 to 400; these read RQNK…GQAN and NGGK…GGKG. Low complexity predominate over residues 38–64; the sequence is KGGNNNNNNNNNNNNNNNNNKNNGGNN. Polar residues predominate over residues 65 to 89; sequence QLCLNPNNVQKGSQQAGTPKQGQAN. A compositionally biased stretch (gly residues) spans 316–326; that stretch reads NNDGGGGGNDG. Composition is skewed to low complexity over residues 327 to 348 and 379 to 393; these read GNNSANNSGSGNKQGGKQQNGA and TQAGGSASNSATNGN. N-linked (GlcNAc...) asparagine glycosylation is found at N328 and N332.

Its subcellular location is the secreted. Secreted protein required for appressorial penetration of intact host epidermal cells and for pathogenicit, but not for subsequent biotrophic and necrotrophic colonization of leaves. This chain is Pathogenicity cluster 5 protein d, found in Colletotrichum graminicola (strain M1.001 / M2 / FGSC 10212) (Maize anthracnose fungus).